The sequence spans 471 residues: Nuclear distribution protein PAC1 (471 aa).

Residues 9–41 (QAEELHKSMIAYLLSVNLSKSAAALREELADSV) enclose the LisH domain. Residues 60–87 (TSVVRLQKKIMDLESRNAALQQELDSAT) are a coiled coil. The segment covering 83 to 93 (LDSATPTSLSR) has biased composition (polar residues). The disordered stretch occupies residues 83–108 (LDSATPTSLSRRNQDPASWLPRAPAR). WD repeat units lie at residues 113–154 (SHRG…RTIK), 156–196 (HTRA…KNIR), 200–247 (GHDH…CVKT), 250–289 (GHLDWVRDVFPSPDGRFLMSGGDDRVPRLLDASSGETKST), 292–352 (GHEH…IKTL), 354–393 (GHDNWIRALVFHPGGKYLLSVSDDKTLRCWDLSQECKCVR), 398–428 (AHGHFVSCIRWAPNIINESGLVSGEGGINGQ), and 429–467 (GTPSMNGVSISTTSKKEDTGGGGKIRCVIATGSVDMNVR). A disordered region spans residues 424–449 (GINGQGTPSMNGVSISTTSKKEDTGG). Residues 428–441 (QGTPSMNGVSISTT) are compositionally biased toward polar residues.

Belongs to the WD repeat LIS1/nudF family. As to quaternary structure, self-associates. Interacts with NDL1 and dynein.

The protein resides in the cytoplasm. It localises to the cytoskeleton. It is found in the spindle pole. Its function is as follows. Positively regulates the activity of the minus-end directed microtubule motor protein dynein. May enhance dynein-mediated microtubule sliding by targeting dynein to the microtubule plus end. Required for nuclear migration during vegetative growth as well as development. Required for retrograde early endosome (EE) transport from the hyphal tip. Required for localization of dynein to the mitotic spindle poles. Recruits additional proteins to the dynein complex at SPBs. The chain is Nuclear distribution protein PAC1 from Coccidioides posadasii (strain C735) (Valley fever fungus).